A 23-amino-acid polypeptide reads, in one-letter code: U3-ctenitoxin-Co1a (23 aa).

Disulfide bonds link Cys-2–Cys-17 and Cys-9–Cys-22.

As to expression, expressed by the venom gland.

It is found in the secreted. Antagonist of L-type calcium channels (Cav1/CACNA1). This chain is U3-ctenitoxin-Co1a, found in Ctenus ornatus (Brazilian spider).